Consider the following 30-residue polypeptide: 2S seed storage-like protein (30 aa).

It belongs to the 2S seed storage albumins family. In terms of assembly, the mature protein is a heterodimer of a small and a large chain linked by 2 disulfide bonds. Extracted from castor bean.

This is a 2S seed storage protein. Inhibits spore germination in R.solani and F.oxysporum. Exhibits anti-trypsin activity. The protein is 2S seed storage-like protein of Ricinus communis (Castor bean).